We begin with the raw amino-acid sequence, 349 residues long: Meiotic recombination protein DMC1 homolog (349 aa).

Residue 138–145 participates in ATP binding; sequence GEFRSGKT. Arg240 is a dsDNA binding site. Arg240, Phe243, Arg246, Arg252, and Arg320 together coordinate ssDNA. DsDNA-binding residues include Arg246 and Arg252.

It belongs to the RecA family. DMC1 subfamily. In terms of assembly, double stacked ring-shaped homooctamer.

It is found in the nucleus. In terms of biological role, may participate in meiotic recombination. The chain is Meiotic recombination protein DMC1 homolog (LIM15) from Lilium longiflorum (Trumpet lily).